Consider the following 356-residue polypeptide: Holliday junction branch migration complex subunit RuvB (356 aa).

Residues 1-14 (MAIVSSITNHSSLP) are compositionally biased toward polar residues. The disordered stretch occupies residues 1–20 (MAIVSSITNHSSLPNDKGEE). The large ATPase domain (RuvB-L) stretch occupies residues 13-201 (LPNDKGEERL…FGITQRLDFY (189 aa)). 9 residues coordinate ATP: leucine 40, arginine 41, glycine 82, lysine 85, threonine 86, threonine 87, arginine 191, tyrosine 201, and arginine 238. Threonine 86 provides a ligand contact to Mg(2+). Residues 202–273 (NYLDLENIIK…VVNDALDLHR (72 aa)) form a small ATPAse domain (RuvB-S) region. Residues 276 to 356 (QRGLDATDRS…LLTSPNNIDK (81 aa)) form a head domain (RuvB-H) region. The DNA site is built by arginine 331 and arginine 336.

It belongs to the RuvB family. In terms of assembly, homohexamer. Forms an RuvA(8)-RuvB(12)-Holliday junction (HJ) complex. HJ DNA is sandwiched between 2 RuvA tetramers; dsDNA enters through RuvA and exits via RuvB. An RuvB hexamer assembles on each DNA strand where it exits the tetramer. Each RuvB hexamer is contacted by two RuvA subunits (via domain III) on 2 adjacent RuvB subunits; this complex drives branch migration. In the full resolvosome a probable DNA-RuvA(4)-RuvB(12)-RuvC(2) complex forms which resolves the HJ.

It is found in the cytoplasm. It catalyses the reaction ATP + H2O = ADP + phosphate + H(+). Functionally, the RuvA-RuvB-RuvC complex processes Holliday junction (HJ) DNA during genetic recombination and DNA repair, while the RuvA-RuvB complex plays an important role in the rescue of blocked DNA replication forks via replication fork reversal (RFR). RuvA specifically binds to HJ cruciform DNA, conferring on it an open structure. The RuvB hexamer acts as an ATP-dependent pump, pulling dsDNA into and through the RuvAB complex. RuvB forms 2 homohexamers on either side of HJ DNA bound by 1 or 2 RuvA tetramers; 4 subunits per hexamer contact DNA at a time. Coordinated motions by a converter formed by DNA-disengaged RuvB subunits stimulates ATP hydrolysis and nucleotide exchange. Immobilization of the converter enables RuvB to convert the ATP-contained energy into a lever motion, pulling 2 nucleotides of DNA out of the RuvA tetramer per ATP hydrolyzed, thus driving DNA branch migration. The RuvB motors rotate together with the DNA substrate, which together with the progressing nucleotide cycle form the mechanistic basis for DNA recombination by continuous HJ branch migration. Branch migration allows RuvC to scan DNA until it finds its consensus sequence, where it cleaves and resolves cruciform DNA. This Prochlorococcus marinus (strain NATL2A) protein is Holliday junction branch migration complex subunit RuvB.